Reading from the N-terminus, the 436-residue chain is DNA primase DnaG (436 aa).

In terms of domain architecture, Toprim spans 169 to 243 (DSIIVVEGRA…DIDYVARAPY (75 aa)). 3 residues coordinate Mg(2+): Glu-175, Asp-217, and Asp-219.

It belongs to the archaeal DnaG primase family. Forms a ternary complex with MCM helicase and DNA. The cofactor is Mg(2+).

The enzyme catalyses ssDNA + n NTP = ssDNA/pppN(pN)n-1 hybrid + (n-1) diphosphate.. RNA polymerase that catalyzes the synthesis of short RNA molecules used as primers for DNA polymerase during DNA replication. This is DNA primase DnaG from Methanococcus maripaludis (strain DSM 14266 / JCM 13030 / NBRC 101832 / S2 / LL).